The sequence spans 361 residues: Cyclin-dependent kinase 10 (361 aa).

One can recognise a Protein kinase domain in the interval 37-321 (FEKLNRIGEG…AGDCLESSYF (285 aa)). ATP contacts are provided by residues 43-51 (IGEGTYGIV) and K66. D161 acts as the Proton acceptor in catalysis. At T194 the chain carries Phosphothreonine. Positions 332–361 (LMPTFPHHRNKRATPATSLGTESQSRRGRP) are disordered.

Belongs to the protein kinase superfamily. CMGC Ser/Thr protein kinase family. CDC2/CDKX subfamily. In terms of assembly, heterodimer with CCNQ, the interaction is required for kinase activity. Interacts with ETS2. Interacts with PRK2.

Its subcellular location is the cytoplasm. It is found in the cytoskeleton. It localises to the cilium basal body. It catalyses the reaction L-seryl-[protein] + ATP = O-phospho-L-seryl-[protein] + ADP + H(+). The enzyme catalyses L-threonyl-[protein] + ATP = O-phospho-L-threonyl-[protein] + ADP + H(+). Cyclin-dependent kinase that phosphorylates the transcription factor ETS2 (in vitro) and positively controls its proteasomal degradation (in cells). Involved in the regulation of actin cytoskeleton organization through the phosphorylation of actin dynamics regulators such as PKN2. Is a negative regulator of ciliogenesis through phosphorylation of PKN2 and promotion of RhoA signaling. The chain is Cyclin-dependent kinase 10 (CDK10) from Bos taurus (Bovine).